A 402-amino-acid polypeptide reads, in one-letter code: Major outer membrane porin (402 aa).

An N-terminal signal peptide occupies residues 1–22 (MKKLLKSALLFAATGSALSLQA).

Belongs to the chlamydial porin (CP) (TC 1.B.2) family. Part of a disulfide cross-linked outer membrane complex (COMC) composed of the major outer membrane porin, the small cysteine-rich protein (OmcA) and the large cysteine-rich periplasmic protein (OmcB).

The protein resides in the cell outer membrane. In terms of biological role, in elementary bodies (EBs, the infectious stage, which is able to survive outside the host cell) provides the structural integrity of the outer envelope through disulfide cross-links with the small cysteine-rich protein and the large cysteine-rich periplasmic protein. It has been described in publications as the Sarkosyl-insoluble COMC (Chlamydia outer membrane complex), and serves as the functional equivalent of peptidoglycan. Its function is as follows. Permits diffusion of specific solutes through the outer membrane. This chain is Major outer membrane porin (ompA), found in Chlamydia psittaci (Chlamydophila psittaci).